The sequence spans 40 residues: uncharacterized protein (40 aa).

The first 27 residues, 1 to 27 (MFPADVILQCFGFSVGIALVGYVISLF), serve as a signal peptide directing secretion.

This is an uncharacterized protein from Archaeoglobus fulgidus (strain ATCC 49558 / DSM 4304 / JCM 9628 / NBRC 100126 / VC-16).